A 182-amino-acid polypeptide reads, in one-letter code: Inosine/xanthosine triphosphatase (182 aa).

It belongs to the YjjX NTPase family. In terms of assembly, homodimer. Mg(2+) serves as cofactor. Requires Mn(2+) as cofactor.

The enzyme catalyses XTP + H2O = XDP + phosphate + H(+). It catalyses the reaction ITP + H2O = IDP + phosphate + H(+). Its function is as follows. Phosphatase that hydrolyzes non-canonical purine nucleotides such as XTP and ITP to their respective diphosphate derivatives. Probably excludes non-canonical purines from DNA/RNA precursor pool, thus preventing their incorporation into DNA/RNA and avoiding chromosomal lesions. This Vibrio parahaemolyticus serotype O3:K6 (strain RIMD 2210633) protein is Inosine/xanthosine triphosphatase.